A 248-amino-acid chain; its full sequence is tRNA pseudouridine synthase A (248 aa).

Catalysis depends on D53, which acts as the Nucleophile. Position 111 (Y111) interacts with substrate.

Belongs to the tRNA pseudouridine synthase TruA family. In terms of assembly, homodimer.

The enzyme catalyses uridine(38/39/40) in tRNA = pseudouridine(38/39/40) in tRNA. Its function is as follows. Formation of pseudouridine at positions 38, 39 and 40 in the anticodon stem and loop of transfer RNAs. The polypeptide is tRNA pseudouridine synthase A (Streptococcus thermophilus (strain CNRZ 1066)).